The sequence spans 104 residues: Thioredoxin (104 aa).

Residues A2 to L104 enclose the Thioredoxin domain. A disulfide bond links C29 and C32.

Belongs to the thioredoxin family.

In terms of biological role, component of the thioredoxin-thioredoxin reductase system. Participates in various redox reactions through the reversible oxidation of its active center dithiol to a disulfide and catalyzes dithiol-disulfide exchange reactions. The polypeptide is Thioredoxin (trxA) (Staphylococcus aureus (strain N315)).